Here is a 597-residue protein sequence, read N- to C-terminus: Sodium/mannose cotransporter SLC5A10 (597 aa).

Topologically, residues methionine 1–glutamine 16 are extracellular. A glycan (N-linked (GlcNAc...) asparagine) is linked at asparagine 5. Residues leucine 17 to isoleucine 37 form a helical membrane-spanning segment. Topologically, residues tryptophan 38–glycine 73 are cytoplasmic. Residues serine 74–phenylalanine 94 form a helical membrane-spanning segment. Topologically, residues glutamate 95–tyrosine 100 are extracellular. A glycan (N-linked (GlcNAc...) asparagine) is linked at asparagine 97. Residues valine 101–methionine 121 form a helical membrane-spanning segment. The Cytoplasmic segment spans residues proline 122–serine 139. Residues valine 140–valine 162 form a helical membrane-spanning segment. Residues histidine 163–threonine 174 are Extracellular-facing. A helical membrane pass occupies residues valine 175–tyrosine 195. Topologically, residues threonine 196–threonine 201 are cytoplasmic. A helical transmembrane segment spans residues leucine 202–tyrosine 222. Residues glutamate 223–threonine 265 are Extracellular-facing. The chain crosses the membrane as a helical span at residues glycine 266 to valine 286. Residues glutamine 287–glycine 301 lie on the Cytoplasmic side of the membrane. Residues serine 302–isoleucine 322 traverse the membrane as a helical segment. Topologically, residues serine 323–arginine 367 are extracellular. The chain crosses the membrane as a helical span at residues glycine 368–serine 388. The Cytoplasmic segment spans residues serine 389 to leucine 410. The helical transmembrane segment at leucine 411–valine 431 threads the bilayer. Residues leucine 432 to methionine 444 lie on the Extracellular side of the membrane. A helical membrane pass occupies residues glutamine 445–tryptophan 465. The Cytoplasmic segment spans residues arginine 466 to glycine 472. A helical membrane pass occupies residues alanine 473–leucine 493. At histidine 494 to tyrosine 514 the chain is on the extracellular side. The helical transmembrane segment at leucine 515 to leucine 535 threads the bilayer. The Cytoplasmic segment spans residues threonine 536–arginine 576. Residues valine 577–alanine 597 form a helical membrane-spanning segment.

The protein belongs to the sodium:solute symporter (SSF) (TC 2.A.21) family. In terms of tissue distribution, predominantyl expressed in kidney. Also detected at very low levels in testes, skeletal muscle, and spleen.

The protein localises to the apical cell membrane. The enzyme catalyses D-mannose(out) + Na(+)(out) = D-mannose(in) + Na(+)(in). It carries out the reaction D-fructopyranose(out) + Na(+)(out) = D-fructopyranose(in) + Na(+)(in). In terms of biological role, electrogenic Na+-coupled sugar symporter that actively transports D-mannose or D-fructose at the plasma membrane, with a Na+ to sugar coupling ratio of 1:1. Transporter activity is driven by a transmembrane Na+ electrochemical gradient set by the Na+/K+ pump. Exclusively recognizes sugar substrates having a pyranose ring with an axial hydroxyl group on carbon 2. Has likely evolved to enable renal reabsorption of D-mannose, an important constituent of oligosaccharide chains of glycoproteins. Contributes to dietary D-fructose reabsorption from glomerular filtrate across the brush border of the kidney. This is Sodium/mannose cotransporter SLC5A10 (SLC5A10) from Bos taurus (Bovine).